The sequence spans 729 residues: Catalase-peroxidase (729 aa).

The disordered stretch occupies residues 1–24 (MDAKTNDGKAGQCPFTSGRGHKNR). Residues 95–217 (WHSAGTYRIT…LAAVQMGLIY (123 aa)) constitute a cross-link (tryptophyl-tyrosyl-methioninium (Trp-Tyr) (with M-243)). The active-site Proton acceptor is the H96. The segment at residues 217 to 243 (YVNPEGPNGQPDPLAAAKDIRETFLRM) is a cross-link (tryptophyl-tyrosyl-methioninium (Tyr-Met) (with W-95)). Position 258 (H258) interacts with heme b.

The protein belongs to the peroxidase family. Peroxidase/catalase subfamily. In terms of assembly, homodimer or homotetramer. Requires heme b as cofactor. Formation of the three residue Trp-Tyr-Met cross-link is important for the catalase, but not the peroxidase activity of the enzyme.

It carries out the reaction H2O2 + AH2 = A + 2 H2O. It catalyses the reaction 2 H2O2 = O2 + 2 H2O. Functionally, bifunctional enzyme with both catalase and broad-spectrum peroxidase activity. In Nitrobacter winogradskyi (strain ATCC 25391 / DSM 10237 / CIP 104748 / NCIMB 11846 / Nb-255), this protein is Catalase-peroxidase.